The chain runs to 213 residues: Adenylate kinase (213 aa).

14-19 serves as a coordination point for ATP; the sequence is GSGKGT. The segment at 34–63 is NMP; the sequence is SSGELFRSAIDSASPLGIKAAEYINQGLLV. AMP-binding positions include Ser-35, Arg-40, 61–63, 89–92, and Gln-96; these read LLV and GFPR. Positions 129 to 162 are LID; it reads SRFICPSCKHVYNQNQGLSECPTCQMKLVRRSDD. Residue Arg-130 participates in ATP binding. The Zn(2+) site is built by Cys-133 and Cys-136. 139-140 lines the ATP pocket; that stretch reads VY. Zn(2+) contacts are provided by Cys-149 and Cys-152. AMP contacts are provided by Arg-159 and Arg-170. ATP is bound at residue Ala-198.

The protein belongs to the adenylate kinase family. Monomer.

The protein resides in the cytoplasm. It catalyses the reaction AMP + ATP = 2 ADP. It participates in purine metabolism; AMP biosynthesis via salvage pathway; AMP from ADP: step 1/1. Its function is as follows. Catalyzes the reversible transfer of the terminal phosphate group between ATP and AMP. Plays an important role in cellular energy homeostasis and in adenine nucleotide metabolism. This chain is Adenylate kinase, found in Chlamydia abortus (strain DSM 27085 / S26/3) (Chlamydophila abortus).